A 539-amino-acid polypeptide reads, in one-letter code: Putative cysteine ligase BshC (539 aa).

Residues L455–K475 adopt a coiled-coil conformation.

Belongs to the BshC family.

In terms of biological role, involved in bacillithiol (BSH) biosynthesis. May catalyze the last step of the pathway, the addition of cysteine to glucosamine malate (GlcN-Mal) to generate BSH. The sequence is that of Putative cysteine ligase BshC from Bacillus velezensis (strain DSM 23117 / BGSC 10A6 / LMG 26770 / FZB42) (Bacillus amyloliquefaciens subsp. plantarum).